The following is a 263-amino-acid chain: MQLYRGMDIGTAKLPPGEWRGLPHHLFDVLDVTDEAAVARYQPEARRVVQEIRERGSTPILVGGSGLYVSSVVFDFRFPGTDTALRARLEAELAAQGPGTLFQRLLARDPEAAKRIGSSNGRRIVRALEVAELTGAAVSGALPEEPKPWVPVRVLGLAAPREELVQRLDARVERMWAEGLLAEVEGLIPLGIERSVTARRAIGYAQALAELTGELTRSQAQAQTQRLTRRYARRQLSWFKRYPGIHWLDYDDPQLVAAALARL.

This sequence belongs to the IPP transferase family. Monomer. Mg(2+) is required as a cofactor.

The enzyme catalyses adenosine(37) in tRNA + dimethylallyl diphosphate = N(6)-dimethylallyladenosine(37) in tRNA + diphosphate. Catalyzes the transfer of a dimethylallyl group onto the adenine at position 37 in tRNAs that read codons beginning with uridine, leading to the formation of N6-(dimethylallyl)adenosine (i(6)A). The polypeptide is tRNA dimethylallyltransferase (Leifsonia xyli subsp. xyli (strain CTCB07)).